The following is a 358-amino-acid chain: Fructose-bisphosphate aldolase 6, cytosolic (358 aa).

At S2 the chain carries N-acetylserine. R39 is a binding site for substrate. C68 carries the post-translational modification S-glutathionyl cysteine; transient. At C173 the chain carries S-glutathionyl cysteine; transient; alternate. C173 carries the S-nitrosocysteine; transient; alternate modification. Residue E183 is the Proton acceptor of the active site. K225 (schiff-base intermediate with dihydroxyacetone-P) is an active-site residue. Substrate is bound by residues 266 to 268 and R298; that span reads SGG. Position 350 is a phosphoserine (S350). K354 carries the N6,N6,N6-trimethyllysine modification.

It belongs to the class I fructose-bisphosphate aldolase family. As to quaternary structure, homotetramer. Interacts with TRX1 and TRX3. Interacts with GAPC1 and VDAC3. In terms of processing, S-glutathionylated at Cys-68 and Cys-173. Post-translationally, S-nitrosylated at Cys-173. As to expression, expressed in roots, rosettes leaves, cauline leaves, stems and flowers.

The protein resides in the cytoplasm. It localises to the cytosol. Its subcellular location is the nucleus. The protein localises to the mitochondrion. It catalyses the reaction beta-D-fructose 1,6-bisphosphate = D-glyceraldehyde 3-phosphate + dihydroxyacetone phosphate. The protein operates within carbohydrate degradation; glycolysis; D-glyceraldehyde 3-phosphate and glycerone phosphate from D-glucose: step 4/4. Its activity is regulated as follows. Total and irreversible inhibition by S-nitrosoglutathione (GSNO). Partial and reversible inhibition by oxidized glutathione (GSSG). In terms of biological role, fructose-bisphosphate aldolase that plays a key role in glycolysis and gluconeogenesis. Associates with GAPC1 to the outer mitochondrial membrane, in a redox-dependent manner, leading to binding and bundling of actin. Actin binding and bundling occurs under oxidizing conditions and is reversible under reducing conditions. May be part of a redox-dependent retrograde signal transduction network for adaptation upon oxidative stress. The protein is Fructose-bisphosphate aldolase 6, cytosolic of Arabidopsis thaliana (Mouse-ear cress).